We begin with the raw amino-acid sequence, 180 residues long: Cell number regulator 7 (180 aa).

Residues 80–102 traverse the membrane as a helical segment; sequence AAAGAIYTLLACFTGFQCHWIYS.

It belongs to the cornifelin family. Expressed in roots, leaves, immature ears and silks. Detected preferentially in silks.

It localises to the membrane. The sequence is that of Cell number regulator 7 (CNR7) from Zea mays (Maize).